Consider the following 66-residue polypeptide: Large ribosomal subunit protein uL29 (66 aa).

The protein belongs to the universal ribosomal protein uL29 family.

This chain is Large ribosomal subunit protein uL29, found in Geobacillus kaustophilus (strain HTA426).